A 191-amino-acid chain; its full sequence is Programmed cell death protein 6 (191 aa).

At alanine 2 the chain carries N-acetylalanine. 5 EF-hand domains span residues 23–58 (PDQS…GTWT), 59–89 (PFNP…TGVW), 90–125 (KYIT…FGYR), 126–161 (LSDQ…LQRL), and 162–191 (TDIF…FSIV). Ca(2+)-binding residues include aspartate 36, aspartate 38, serine 40, valine 42, and glutamate 47. Aspartate 103, aspartate 105, serine 107, methionine 109, and glutamate 114 together coordinate Ca(2+). 4 residues coordinate Mg(2+): aspartate 169, aspartate 171, aspartate 173, and tryptophan 175.

As to quaternary structure, homodimer and heterodimer; heterodimerizes (via the EF-hand 5) with PEF1. Isoform 1 and isoform 2 self-associate; probably forming homodimers. Interacts with CPNE4 (via VWFA domain). Interacts with PDCD6IP; the interaction is calcium-dependent. Interacts with RBM22. Interacts with PLSCR4. Interacts with ANXA7 and TSG101. Interacts with DAPK1. Interacts with SEC31A; the interaction is calcium-dependent and promotes monoubiquitination of SEC31A. Interacts with ANXA11 (via N-terminus); the interaction is calcium-dependent. Interacts with PLSCR3 (via N-terminus); the interaction is calcium-dependent. Interacts with MCOLN1; the interaction is calcium-dependent. Interacts with KDR; the interaction is calcium-dependent. Interacts with HEBP2; the interaction is calcium-dependent. Interacts with TFG. Isoform 1: Interacts with SHISA5, leading to stabilize it. Isoform 2: Does not interact with SHISA5. Isoform 2: Does not interact with PDCD6IP, TSG101, ANXA7 and ANXA11.

The protein localises to the endoplasmic reticulum membrane. It is found in the cytoplasmic vesicle. It localises to the COPII-coated vesicle membrane. Its subcellular location is the cytoplasm. The protein resides in the nucleus. The protein localises to the endosome. In terms of biological role, calcium sensor that plays a key role in processes such as endoplasmic reticulum (ER)-Golgi vesicular transport, endosomal biogenesis or membrane repair. Acts as an adapter that bridges unrelated proteins or stabilizes weak protein-protein complexes in response to calcium: calcium-binding triggers exposure of apolar surface, promoting interaction with different sets of proteins thanks to 3 different hydrophobic pockets, leading to translocation to membranes. Involved in ER-Golgi transport by promoting the association between PDCD6IP and TSG101, thereby bridging together the ESCRT-III and ESCRT-I complexes. Together with PEF1, acts as a calcium-dependent adapter for the BCR(KLHL12) complex, a complex involved in ER-Golgi transport by regulating the size of COPII coats. In response to cytosolic calcium increase, the heterodimer formed with PEF1 interacts with, and bridges together the BCR(KLHL12) complex and SEC31 (SEC31A or SEC31B), promoting monoubiquitination of SEC31 and subsequent collagen export, which is required for neural crest specification. Involved in the regulation of the distribution and function of MCOLN1 in the endosomal pathway. Promotes localization and polymerization of TFG at endoplasmic reticulum exit site. Required for T-cell receptor-, Fas-, and glucocorticoid-induced apoptosis. May mediate Ca(2+)-regulated signals along the death pathway: interaction with DAPK1 can accelerate apoptotic cell death by increasing caspase-3 activity. Its role in apoptosis may however be indirect, as suggested by knockout experiments. May inhibit KDR/VEGFR2-dependent angiogenesis; the function involves inhibition of VEGF-induced phosphorylation of the Akt signaling pathway. In case of infection by HIV-1 virus, indirectly inhibits HIV-1 production by affecting viral Gag expression and distribution. Its function is as follows. Has a lower Ca(2+) affinity than isoform 1. This chain is Programmed cell death protein 6 (PDCD6), found in Homo sapiens (Human).